The following is a 130-amino-acid chain: S-adenosylmethionine decarboxylase proenzyme (130 aa).

S63 serves as the catalytic Schiff-base intermediate with substrate; via pyruvic acid. S63 is modified (pyruvic acid (Ser); by autocatalysis). H68 (proton acceptor; for processing activity) is an active-site residue. C83 serves as the catalytic Proton donor; for catalytic activity.

This sequence belongs to the prokaryotic AdoMetDC family. Type 1 subfamily. Heterotetramer of two alpha and two beta chains arranged as a dimer of alpha/beta heterodimers. The cofactor is pyruvate. In terms of processing, is synthesized initially as an inactive proenzyme. Formation of the active enzyme involves a self-maturation process in which the active site pyruvoyl group is generated from an internal serine residue via an autocatalytic post-translational modification. Two non-identical subunits are generated from the proenzyme in this reaction, and the pyruvate is formed at the N-terminus of the alpha chain, which is derived from the carboxyl end of the proenzyme. The post-translation cleavage follows an unusual pathway, termed non-hydrolytic serinolysis, in which the side chain hydroxyl group of the serine supplies its oxygen atom to form the C-terminus of the beta chain, while the remainder of the serine residue undergoes an oxidative deamination to produce ammonia and the pyruvoyl group blocking the N-terminus of the alpha chain.

It catalyses the reaction S-adenosyl-L-methionine + H(+) = S-adenosyl 3-(methylsulfanyl)propylamine + CO2. The protein operates within amine and polyamine biosynthesis; S-adenosylmethioninamine biosynthesis; S-adenosylmethioninamine from S-adenosyl-L-methionine: step 1/1. Functionally, catalyzes the decarboxylation of S-adenosylmethionine to S-adenosylmethioninamine (dcAdoMet), the propylamine donor required for the synthesis of the polyamines spermine and spermidine from the diamine putrescine. The sequence is that of S-adenosylmethionine decarboxylase proenzyme from Thermosipho africanus (strain TCF52B).